A 334-amino-acid polypeptide reads, in one-letter code: GTP 3',8-cyclase (334 aa).

In terms of domain architecture, Radical SAM core spans 13–239 (RFHRKFYYLR…KVKAANDGPA (227 aa)). Arg22 provides a ligand contact to GTP. Cys29 and Cys33 together coordinate [4Fe-4S] cluster. Tyr35 contributes to the S-adenosyl-L-methionine binding site. Position 36 (Cys36) interacts with [4Fe-4S] cluster. Arg73 provides a ligand contact to GTP. Gly77 contacts S-adenosyl-L-methionine. Thr104 is a binding site for GTP. Ser128 is a binding site for S-adenosyl-L-methionine. A GTP-binding site is contributed by Lys165. Met199 contacts S-adenosyl-L-methionine. [4Fe-4S] cluster is bound by residues Cys262 and Cys265. 267–269 (RLR) provides a ligand contact to GTP. [4Fe-4S] cluster is bound at residue Cys279.

It belongs to the radical SAM superfamily. MoaA family. In terms of assembly, monomer and homodimer. [4Fe-4S] cluster is required as a cofactor.

It carries out the reaction GTP + AH2 + S-adenosyl-L-methionine = (8S)-3',8-cyclo-7,8-dihydroguanosine 5'-triphosphate + 5'-deoxyadenosine + L-methionine + A + H(+). It participates in cofactor biosynthesis; molybdopterin biosynthesis. In terms of biological role, catalyzes the cyclization of GTP to (8S)-3',8-cyclo-7,8-dihydroguanosine 5'-triphosphate. In Vibrio vulnificus (strain YJ016), this protein is GTP 3',8-cyclase.